The following is a 174-amino-acid chain: Probable adenylyl-sulfate kinase (174 aa).

An ATP-binding site is contributed by 10–17 (GPSGAGKT). The active-site Phosphoserine intermediate is the Ser84.

It belongs to the APS kinase family.

It catalyses the reaction adenosine 5'-phosphosulfate + ATP = 3'-phosphoadenylyl sulfate + ADP + H(+). The protein operates within sulfur metabolism; hydrogen sulfide biosynthesis; sulfite from sulfate: step 2/3. Catalyzes the synthesis of activated sulfate. This Pyrococcus abyssi (strain GE5 / Orsay) protein is Probable adenylyl-sulfate kinase (cysC).